The primary structure comprises 302 residues: Sulfate adenylyltransferase subunit 2 (302 aa).

It belongs to the PAPS reductase family. CysD subfamily. As to quaternary structure, heterodimer composed of CysD, the smaller subunit, and CysN.

It carries out the reaction sulfate + ATP + H(+) = adenosine 5'-phosphosulfate + diphosphate. The protein operates within sulfur metabolism; hydrogen sulfide biosynthesis; sulfite from sulfate: step 1/3. Functionally, with CysN forms the ATP sulfurylase (ATPS) that catalyzes the adenylation of sulfate producing adenosine 5'-phosphosulfate (APS) and diphosphate, the first enzymatic step in sulfur assimilation pathway. APS synthesis involves the formation of a high-energy phosphoric-sulfuric acid anhydride bond driven by GTP hydrolysis by CysN coupled to ATP hydrolysis by CysD. The chain is Sulfate adenylyltransferase subunit 2 from Erwinia tasmaniensis (strain DSM 17950 / CFBP 7177 / CIP 109463 / NCPPB 4357 / Et1/99).